A 99-amino-acid polypeptide reads, in one-letter code: Large ribosomal subunit protein uL23 (99 aa).

The protein belongs to the universal ribosomal protein uL23 family. As to quaternary structure, part of the 50S ribosomal subunit. Contacts protein L29, and trigger factor when it is bound to the ribosome.

In terms of biological role, one of the early assembly proteins it binds 23S rRNA. One of the proteins that surrounds the polypeptide exit tunnel on the outside of the ribosome. Forms the main docking site for trigger factor binding to the ribosome. The polypeptide is Large ribosomal subunit protein uL23 (Francisella tularensis subsp. tularensis (strain SCHU S4 / Schu 4)).